The chain runs to 345 residues: Tetraacyldisaccharide 4'-kinase (345 aa).

51–58 (HVGGAGKT) contacts ATP.

It belongs to the LpxK family.

The catalysed reaction is a lipid A disaccharide + ATP = a lipid IVA + ADP + H(+). It participates in glycolipid biosynthesis; lipid IV(A) biosynthesis; lipid IV(A) from (3R)-3-hydroxytetradecanoyl-[acyl-carrier-protein] and UDP-N-acetyl-alpha-D-glucosamine: step 6/6. In terms of biological role, transfers the gamma-phosphate of ATP to the 4'-position of a tetraacyldisaccharide 1-phosphate intermediate (termed DS-1-P) to form tetraacyldisaccharide 1,4'-bis-phosphate (lipid IVA). The sequence is that of Tetraacyldisaccharide 4'-kinase from Bradyrhizobium sp. (strain BTAi1 / ATCC BAA-1182).